Here is a 442-residue protein sequence, read N- to C-terminus: C4-dicarboxylate transport protein (442 aa).

Transmembrane regions (helical) follow at residues 13 to 33, 49 to 69, 81 to 101, 149 to 169, 193 to 213, 227 to 247, 312 to 332, 336 to 356, and 357 to 377; these read VLYF…HFYP, GIKM…IAGM, LALL…LVVV, AFAK…GFAL, MIAI…AFTI, LMGS…GIIA, IYLT…MTLL, TLLA…GSGF, and IVLA…LAII.

Belongs to the dicarboxylate/amino acid:cation symporter (DAACS) (TC 2.A.23) family.

It is found in the cell membrane. Its function is as follows. Responsible for the transport of dicarboxylates such as succinate, fumarate, and malate across the membrane. The polypeptide is C4-dicarboxylate transport protein (Polynucleobacter asymbioticus (strain DSM 18221 / CIP 109841 / QLW-P1DMWA-1) (Polynucleobacter necessarius subsp. asymbioticus)).